The chain runs to 261 residues: MAESHLQSSLITASQFFEIWLHFDADGSGYLEGKELQNLIQELLQARKKAGLELSPEMKTFVDQYGQRDDGKIGIVELAHVLPTEENFLLLFRCQQLKSCEEFMKTWRKYDTDHSGFIETEELKNFLKDLLEKANKTVDDTKLAEYTDLMLKLFDSNNDGKLELTEMARLLPVQENFLLKFQGIKMCGKEFNKAFELYDQDGNGYIDENELDALLKDLCEKNKQELDINNISTYKKNIMALSDGGKLYRTDLALILSAGDN.

Position 2 is an N-acetylalanine (A2). The segment at 2–7 (AESHLQ) is interaction with RANBP9. EF-hand domains follow at residues 11 to 46 (ITAS…LLQA), 53 to 88 (ELSP…EENF), 98 to 133 (KSCE…LLEK), 142 to 177 (KLAE…QENF), and 186 to 221 (MCGK…LCEK). D24, D26, S28, Y30, and E35 together coordinate Ca(2+). 14 residues coordinate Ca(2+): D111, D113, S115, E122, D155, N157, D159, K161, E166, D199, D201, N203, Y205, and E210.

It belongs to the calbindin family. In terms of assembly, interacts with RANBP9.

In terms of biological role, buffers cytosolic calcium. May stimulate a membrane Ca(2+)-ATPase and a 3',5'-cyclic nucleotide phosphodiesterase. The sequence is that of Calbindin (Calb1) from Rattus norvegicus (Rat).